The sequence spans 338 residues: Glycerol-3-phosphate dehydrogenase [NAD(P)+] (338 aa).

NADPH is bound by residues Ser13, Trp14, and Lys108. The sn-glycerol 3-phosphate site is built by Lys108, Gly139, and Ser141. Ala143 serves as a coordination point for NADPH. Sn-glycerol 3-phosphate contacts are provided by Lys194, Asp247, Ser257, Arg258, and Asn259. The active-site Proton acceptor is Lys194. Arg258 serves as a coordination point for NADPH. Val282 and Glu284 together coordinate NADPH.

The protein belongs to the NAD-dependent glycerol-3-phosphate dehydrogenase family.

The protein localises to the cytoplasm. The enzyme catalyses sn-glycerol 3-phosphate + NAD(+) = dihydroxyacetone phosphate + NADH + H(+). The catalysed reaction is sn-glycerol 3-phosphate + NADP(+) = dihydroxyacetone phosphate + NADPH + H(+). It functions in the pathway membrane lipid metabolism; glycerophospholipid metabolism. Its function is as follows. Catalyzes the reduction of the glycolytic intermediate dihydroxyacetone phosphate (DHAP) to sn-glycerol 3-phosphate (G3P), the key precursor for phospholipid synthesis. This Streptococcus pneumoniae (strain JJA) protein is Glycerol-3-phosphate dehydrogenase [NAD(P)+].